A 67-amino-acid chain; its full sequence is Alpha-conotoxin-like Qc1.1a (67 aa).

The N-terminal stretch at 1 to 21 (MGMRMMFTMFLLVVLAITVVS) is a signal peptide. A propeptide spanning residues 22–46 (FTSDHASDGRNTAANDKASNLMALR) is cleaved from the precursor. 2 disulfides stabilise this stretch: cysteine 49-cysteine 55 and cysteine 50-cysteine 63. Residues 51–53 (PDP) form a lacks the Ser-Xaa-Pro motif that is crucial for potent interaction with nAChR region.

Belongs to the conotoxin A superfamily. As to expression, expressed by the venom duct.

Its subcellular location is the secreted. Alpha-conotoxins act on postsynaptic membranes, they bind to the nicotinic acetylcholine receptors (nAChR) and thus inhibit them. Has possibly a distinct nAChR binding mode from other alpha-conotoxins, due to a different three residue motif (lacks the Ser-Xaa-Pro motif). The protein is Alpha-conotoxin-like Qc1.1a of Conus quercinus (Oak cone).